We begin with the raw amino-acid sequence, 170 residues long: uncharacterized protein (170 aa).

This is an uncharacterized protein from Arabidopsis thaliana (Mouse-ear cress).